We begin with the raw amino-acid sequence, 687 residues long: DNA ligase (687 aa).

NAD(+) contacts are provided by residues 34-38 (DAEYD), 83-84 (SL), and glutamate 117. Residue lysine 119 is the N6-AMP-lysine intermediate of the active site. 4 residues coordinate NAD(+): arginine 140, glutamate 182, lysine 298, and lysine 322. 4 residues coordinate Zn(2+): cysteine 416, cysteine 419, cysteine 434, and cysteine 439. Positions 609–687 (EARGPFAGKT…EEEFVRLLKE (79 aa)) constitute a BRCT domain.

This sequence belongs to the NAD-dependent DNA ligase family. LigA subfamily. The cofactor is Mg(2+). It depends on Mn(2+) as a cofactor.

The catalysed reaction is NAD(+) + (deoxyribonucleotide)n-3'-hydroxyl + 5'-phospho-(deoxyribonucleotide)m = (deoxyribonucleotide)n+m + AMP + beta-nicotinamide D-nucleotide.. DNA ligase that catalyzes the formation of phosphodiester linkages between 5'-phosphoryl and 3'-hydroxyl groups in double-stranded DNA using NAD as a coenzyme and as the energy source for the reaction. It is essential for DNA replication and repair of damaged DNA. The sequence is that of DNA ligase from Anaeromyxobacter sp. (strain K).